We begin with the raw amino-acid sequence, 206 residues long: Stage III sporulation protein AF (206 aa).

Helical transmembrane passes span 1–21 and 34–54; these read MSFL…AIVI and AKMV…FKLF.

Its subcellular location is the cell membrane. This chain is Stage III sporulation protein AF (spoIIIAF), found in Bacillus subtilis (strain 168).